The sequence spans 164 residues: CGRRRGSLAWPDASSPSANPRPGAGAAESSACTTSGWSRWRTSLLVAGALLGLQWLPQLAGLWVACFGFGTGACIILALMFMGLRTENPRQAAALSGMAQCVGYLLAAFGPPLVGGLRDRSQDWNPALTVCLVLSLTMAAAGMLAGRNRRIRSASTAASTPAAG.

A disordered region spans residues 1-30; the sequence is CGRRRGSLAWPDASSPSANPRPGAGAAESS. The next 3 membrane-spanning stretches (helical) occupy residues 62–82, 97–117, and 126–146; these read LWVACFGFGTGACIILALMFM, GMAQCVGYLLAAFGPPLVGGL, and PALTVCLVLSLTMAAAGMLAG.

This sequence belongs to the major facilitator superfamily. Cyanate porter (TC 2.A.1.17) family.

Its subcellular location is the cell membrane. In terms of biological role, may be involved in uptake of anionic 4-hydroxy-benzoate. The chain is Putative anionic 4-hydroxy-benzoate permease from Thauera aromatica.